Here is an 866-residue protein sequence, read N- to C-terminus: Autophagy-related protein 9 (866 aa).

At 1–94 the chain is on the cytoplasmic side; that stretch reads MMSSGHKGPN…KGLWCIIVKW (94 aa). The chain crosses the membrane as a helical span at residues 95 to 115; that stretch reads AVELLSLGFIICFSGFFLLYV. At 116–153 the chain is on the lumenal side; that stretch reads DWNGLQNAKCGMDAVESGTKPCDLVKEAIHPHPLSPFT. The helical transmembrane segment at 154 to 174 threads the bilayer; it reads LTTAIIVGYLALFSVYWLFCF. At 175–319 the chain is on the cytoplasmic side; the sequence is LRFFAQLKDT…VSNPTTLKKR (145 aa). An intramembrane segment occupies 320–340; the sequence is LFVVGLAMLLLSPFLVIFMLV. The Cytoplasmic segment spans residues 341–404; the sequence is YLFLRHAEQF…LKQFPSPIIS (64 aa). Residues 405–425 traverse the membrane as a helical segment; it reads IIAKFVSFVSGGFAAVLIIIA. Topologically, residues 426–433 are lumenal; that stretch reads FLEESLLE. Residues 434–454 traverse the membrane as a helical segment; that stretch reads GHIFGRNLFWYAAVFGTITAI. Topologically, residues 455 to 507 are cytoplasmic; that stretch reads SRAAISDELLVLDPVGTMSLVVQNTHYMPKRWRGKENKDDVRLELETLFQYTG. An intramembrane segment occupies 508-528; sequence MMLLEEIASIFITPFLLMFVV. At 529–866 the chain is on the cytoplasmic side; it reads PKRVDDILQF…ETSTSSTTLR (338 aa). The interval 744–781 is disordered; the sequence is QPEGEDSYGSQHPLDGRNQWWGRGNHSQISTAHPATTN. Over residues 768-781 the composition is skewed to polar residues; it reads NHSQISTAHPATTN.

This sequence belongs to the ATG9 family. As to quaternary structure, homotrimer; forms a homotrimer with a central pore that forms a path between the two membrane leaflets. Expressed in roots, leaves, stems and flowers.

It localises to the preautophagosomal structure membrane. Its function is as follows. Phospholipid scramblase involved in autophagy by mediating autophagosomal membrane expansion. Cycles between the preautophagosomal structure/phagophore assembly site (PAS) and the cytoplasmic vesicle pool and supplies membrane for the growing autophagosome. Lipid scramblase activity plays a key role in preautophagosomal structure/phagophore assembly by distributing the phospholipids that arrive through ATG2 from the cytoplasmic to the luminal leaflet of the bilayer, thereby driving autophagosomal membrane expansion. In addition to autophagy, also plays a role in necrotic cell death. Plays an essential role in plant nutrient recycling. This chain is Autophagy-related protein 9, found in Arabidopsis thaliana (Mouse-ear cress).